The sequence spans 160 residues: Ureidoglycolate lyase (160 aa).

This sequence belongs to the ureidoglycolate lyase family. Homodimer. Ni(2+) is required as a cofactor.

The enzyme catalyses (S)-ureidoglycolate = urea + glyoxylate. It functions in the pathway nitrogen metabolism; (S)-allantoin degradation. Catalyzes the catabolism of the allantoin degradation intermediate (S)-ureidoglycolate, generating urea and glyoxylate. Involved in the anaerobic utilization of allantoin as sole nitrogen source. Reinforces the induction of genes involved in the degradation of allantoin and glyoxylate by producing glyoxylate. In Escherichia coli (strain K12 / MC4100 / BW2952), this protein is Ureidoglycolate lyase.